We begin with the raw amino-acid sequence, 579 residues long: Putative fatty-acid--CoA ligase fadD21 (579 aa).

It belongs to the ATP-dependent AMP-binding enzyme family.

This Mycobacterium leprae (strain TN) protein is Putative fatty-acid--CoA ligase fadD21 (fadD21).